The primary structure comprises 397 residues: 1-deoxy-D-xylulose 5-phosphate reductoisomerase (397 aa).

Residues T10, G11, S12, I13, G36, N38, and N124 each contribute to the NADPH site. 1-deoxy-D-xylulose 5-phosphate is bound at residue K125. E126 is an NADPH binding site. D150 provides a ligand contact to Mn(2+). 4 residues coordinate 1-deoxy-D-xylulose 5-phosphate: S151, E152, S186, and H209. E152 provides a ligand contact to Mn(2+). G215 is an NADPH binding site. 1-deoxy-D-xylulose 5-phosphate-binding residues include S222, N227, K228, and E231. Position 231 (E231) interacts with Mn(2+).

This sequence belongs to the DXR family. The cofactor is Mg(2+). Requires Mn(2+) as cofactor.

The catalysed reaction is 2-C-methyl-D-erythritol 4-phosphate + NADP(+) = 1-deoxy-D-xylulose 5-phosphate + NADPH + H(+). The protein operates within isoprenoid biosynthesis; isopentenyl diphosphate biosynthesis via DXP pathway; isopentenyl diphosphate from 1-deoxy-D-xylulose 5-phosphate: step 1/6. Its function is as follows. Catalyzes the NADPH-dependent rearrangement and reduction of 1-deoxy-D-xylulose-5-phosphate (DXP) to 2-C-methyl-D-erythritol 4-phosphate (MEP). The protein is 1-deoxy-D-xylulose 5-phosphate reductoisomerase of Photobacterium profundum (strain SS9).